The sequence spans 208 residues: Large ribosomal subunit protein uL3c (208 aa).

Residues 129-165 (TRGPMTHGSKNHREPGSIGQGSTPGKVHKGKKMAGRL) form a disordered region.

It belongs to the universal ribosomal protein uL3 family. In terms of assembly, part of the 50S ribosomal subunit.

The protein localises to the plastid. Its subcellular location is the chloroplast. Its function is as follows. One of the primary rRNA binding proteins, it binds directly near the 3'-end of the 23S rRNA, where it nucleates assembly of the 50S subunit. The sequence is that of Large ribosomal subunit protein uL3c (rpl3) from Rhodomonas salina (Cryptomonas salina).